Consider the following 1555-residue polypeptide: Glycogen debranching enzyme (1555 aa).

Phosphoserine is present on Ser-87. Active-site residues include Asp-549, His-552, and Asp-650.

It belongs to the glycogen debranching enzyme family. In terms of assembly, monomer. Interacts with NHLRC1/malin. In terms of processing, the N-terminus is blocked. Ubiquitinated.

It is found in the cytoplasm. It catalyses the reaction Transfers a segment of a (1-&gt;4)-alpha-D-glucan to a new position in an acceptor, which may be glucose or a (1-&gt;4)-alpha-D-glucan.. The enzyme catalyses Hydrolysis of (1-&gt;6)-alpha-D-glucosidic branch linkages in glycogen phosphorylase limit dextrin.. In terms of biological role, multifunctional enzyme acting as 1,4-alpha-D-glucan:1,4-alpha-D-glucan 4-alpha-D-glycosyltransferase and amylo-1,6-glucosidase in glycogen degradation. This is Glycogen debranching enzyme (AGL) from Oryctolagus cuniculus (Rabbit).